A 249-amino-acid chain; its full sequence is Kallikrein-7 (249 aa).

The first 21 residues, 1–21 (MGVWLLSLITVLLSLALETAG), serve as a signal peptide directing secretion. The propeptide at 22–25 (QGER) is activation peptide. The tract at residues 26–246 (IIDGYKCKEG…YKRWVMETMK (221 aa)) is serine protease. Cystine bridges form between Cys-32–Cys-161, Cys-51–Cys-67, Cys-133–Cys-235, Cys-140–Cys-207, Cys-172–Cys-186, and Cys-197–Cys-222. Catalysis depends on charge relay system residues His-66 and Asp-108. Ser-201 (charge relay system) is an active-site residue.

This sequence belongs to the peptidase S1 family. Kallikrein subfamily. In terms of tissue distribution, expressed in skin and, at lower levels, in lung, kidney, brain, heart and spleen. In skin, expressed in high suprabasal keratinocytes and in the luminal parts of hair follicles. Not detected in liver and skeletal muscle.

The protein localises to the secreted. The enzyme catalyses Cleavage of proteins with aromatic side chains in the P1 position.. Inhibited by Zn2+ and Cu2+ at low micromolar concentrations. Inhibited by SERPINA12. Functionally, may catalyze the degradation of intercellular cohesive structures in the cornified layer of the skin in the continuous shedding of cells from the skin surface. Specific for amino acid residues with aromatic side chains in the P1 position. Cleaves insulin A chain at '14-Tyr-|-Gln-15' and insulin B chain at '6-Leu-|-Cys-7', '16-Tyr-|-Leu-17', '25-Phe-|-Tyr-26' and '26-Tyr-|-Thr-27'. Could play a role in the activation of precursors to inflammatory cytokines. The protein is Kallikrein-7 (Klk7) of Mus musculus (Mouse).